The chain runs to 506 residues: GPI mannosyltransferase 3 (506 aa).

The N-linked (GlcNAc...) asparagine glycan is linked to N115. Helical transmembrane passes span 180-200 (AFAC…LLFW), 229-249 (YGRL…NIIA), 257-277 (FVFP…SSLY), 285-305 (YLSQ…LLTM), 330-350 (FVYP…SSFS), and 358-378 (FFFL…RFHQ). The N-linked (GlcNAc...) asparagine glycan is linked to N395.

This sequence belongs to the glycosyltransferase 22 family. PIGB subfamily.

The protein resides in the endoplasmic reticulum membrane. The protein operates within glycolipid biosynthesis; glycosylphosphatidylinositol-anchor biosynthesis. Functionally, mannosyltransferase involved in glycosylphosphatidylinositol-anchor biosynthesis. Transfers the third mannose to Man2-GlcN-acyl-PI during GPI precursor assembly. This chain is GPI mannosyltransferase 3 (gpi10), found in Schizosaccharomyces pombe (strain 972 / ATCC 24843) (Fission yeast).